Here is an 83-residue protein sequence, read N- to C-terminus: Hainantoxin-III 7 (83 aa).

Positions 1–21 (MKASMFLALAGLVLLFVVGYA) are cleaved as a signal peptide. Residues 22–48 (SESEEKEFPRELLSKVFAVDDFKGEER) constitute a propeptide that is removed on maturation. Intrachain disulfides connect Cys50/Cys65, Cys57/Cys70, and Cys64/Cys77. The residue at position 81 (Leu81) is a Leucine amide.

The protein belongs to the neurotoxin 10 (Hwtx-1) family. 15 (Hntx-3) subfamily. Monomer. As to expression, expressed by the venom gland.

Its subcellular location is the secreted. Its function is as follows. Selective antagonist of neuronal tetrodotoxin (TTX)-sensitive voltage-gated sodium channels (IC(50)=1270 nM on Nav1.1/SCN1A, 270 nM on Nav1.2/SCN2A, 491 nM on Nav1.3/SCN3A and 232 nM on Nav1.7/SCN9A). This toxin suppress Nav1.7 current amplitude without significantly altering the activation, inactivation, and repriming kinetics. Short extreme depolarizations partially activate the toxin-bound channel, indicating voltage-dependent inhibition of this toxin. This toxin increases the deactivation of the Nav1.7 current after extreme depolarizations. The toxin-Nav1.7 complex is gradually dissociated upon prolonged strong depolarizations in a voltage-dependent manner, and the unbound toxin rebinds to Nav1.7 after a long repolarization. Moreover, analysis of chimeric channels showed that the DIIS3-S4 linker is critical for toxin binding to Nav1.7. These data are consistent with this toxin interacting with Nav1.7 site 4 and trapping the domain II voltage sensor in the closed state. This Cyriopagopus hainanus (Chinese bird spider) protein is Hainantoxin-III 7.